A 149-amino-acid polypeptide reads, in one-letter code: Nascent polypeptide-associated complex subunit beta-2 (149 aa).

In terms of domain architecture, NAC-A/B spans 38-103 (DKDNTKLQAE…PKENTLNGLY (66 aa)).

It belongs to the NAC-beta family. As to quaternary structure, part of the nascent polypeptide-associated complex (NAC), consisting of EGD2 and either EGD1 or BTT1. NAC associates with ribosomes via EGD1 or BTT1.

Its subcellular location is the cytoplasm. The protein resides in the nucleus. Functionally, acts as a component of the nascent polypeptide-associated complex (NAC), which promotes mitochondrial protein import by enhancing productive ribosome interactions with the outer mitochondrial membrane. Also blocks the inappropriate interaction of ribosomes translating non-secretory nascent polypeptides with translocation sites in the membrane of the endoplasmic reticulum. BTT1 may act as a transcription factor that exert a negative effect on the expression of several genes that are transcribed by RNA polymerase II. This is Nascent polypeptide-associated complex subunit beta-2 (BTT1) from Saccharomyces cerevisiae (strain ATCC 204508 / S288c) (Baker's yeast).